The primary structure comprises 354 residues: Methylthioribose-1-phosphate isomerase (354 aa).

Residue aspartate 246 is the Proton donor of the active site.

This sequence belongs to the eIF-2B alpha/beta/delta subunits family. MtnA subfamily.

Its subcellular location is the cytoplasm. The protein localises to the nucleus. It catalyses the reaction 5-(methylsulfanyl)-alpha-D-ribose 1-phosphate = 5-(methylsulfanyl)-D-ribulose 1-phosphate. The protein operates within amino-acid biosynthesis; L-methionine biosynthesis via salvage pathway; L-methionine from S-methyl-5-thio-alpha-D-ribose 1-phosphate: step 1/6. Functionally, catalyzes the interconversion of methylthioribose-1-phosphate (MTR-1-P) into methylthioribulose-1-phosphate (MTRu-1-P). The polypeptide is Methylthioribose-1-phosphate isomerase (mri1) (Xenopus laevis (African clawed frog)).